The sequence spans 547 residues: Sodium-coupled neutral amino acid transporter 4 (547 aa).

Positions 1–26 (MDPMELRNVNIEPDDESSSGESVPDS) are disordered. The Extracellular portion of the chain corresponds to 1–104 (MDPMELRNVN…GLSYAMANTG (104 aa)). Residue Ser49 is modified to Phosphoserine. The chain crosses the membrane as a helical span at residues 105–125 (IILFIIMLLAVAILSLYSVHL). Over 126–151 (LLKTAKEGGSLIYEKLGEKAFGWPGK) the chain is Cytoplasmic. The chain crosses the membrane as a helical span at residues 152–172 (IGAFISITMQNIGAMSSYLFI). Topologically, residues 173-195 (IKYELPEVIRAFMGLEENTGEWY) are extracellular. A helical membrane pass occupies residues 196–216 (PNGNYLIVFVSLGIILPLSLL). Topologically, residues 217–220 (KNLG) are cytoplasmic. A helical membrane pass occupies residues 221 to 241 (YLGYTSGFSLTCMVFFVSVVI). Over 242-332 (YKKFQIPCPL…PKYFVFNSRT (91 aa)) the chain is Extracellular. Cys249 and Cys321 are disulfide-bonded. Residues Asn260, Asn264, and Asn276 are each glycosylated (N-linked (GlcNAc...) asparagine). The helical transmembrane segment at 333–353 (AYAIPILAFAFVCHPEVLPIY) threads the bilayer. Residues 354–369 (SELKDRSRRKMQTVSN) are Cytoplasmic-facing. A helical transmembrane segment spans residues 370 to 390 (ISITGMLVMYLLAALFGYLTF). Residues 391–411 (YGEVEDELLHAYSKVYTFDIP) lie on the Extracellular side of the membrane. Residues 412–432 (LLMVRLAVLVAVTLTVPIVLF) form a helical membrane-spanning segment. At 433–453 (PIRTSVTTLLFPKRPFSWIRH) the chain is on the cytoplasmic side. A helical transmembrane segment spans residues 454 to 474 (FLIAAVLIALNNVLVILVPTI). Topologically, residues 475–476 (KY) are extracellular. The helical transmembrane segment at 477–497 (IFGFIGASSATMLIFILPAVF) threads the bilayer. Over 498 to 514 (YLKLVKKESFRSPQKVG) the chain is Cytoplasmic. Residues 515-535 (ALIFLVVGIIFMIGSMALIII) form a helical membrane-spanning segment. At 536–547 (DWIYDPPNSKHH) the chain is on the extracellular side.

It belongs to the amino acid/polyamine transporter 2 family. The disulfide bond plays an important role in substrate transport, but has no effect on trafficking to the cell surface.

It localises to the cell membrane. Its subcellular location is the cell projection. It is found in the microvillus membrane. It carries out the reaction L-methionine(in) + Na(+)(in) = L-methionine(out) + Na(+)(out). It catalyses the reaction L-asparagine(in) + Na(+)(in) = L-asparagine(out) + Na(+)(out). The catalysed reaction is L-threonine(in) + Na(+)(in) = L-threonine(out) + Na(+)(out). The enzyme catalyses L-serine(in) + Na(+)(in) = L-serine(out) + Na(+)(out). It carries out the reaction glycine(in) + Na(+)(in) = glycine(out) + Na(+)(out). It catalyses the reaction L-alanine(in) + Na(+)(in) = L-alanine(out) + Na(+)(out). The catalysed reaction is L-glutamine(in) + Na(+)(in) = L-glutamine(out) + Na(+)(out). The enzyme catalyses L-histidine(in) + Na(+)(in) = L-histidine(out) + Na(+)(out). It carries out the reaction L-cysteine(in) + Na(+)(in) = L-cysteine(out) + Na(+)(out). It catalyses the reaction L-proline(in) + Na(+)(in) = L-proline(out) + Na(+)(out). In terms of biological role, symporter that cotransports neutral amino acids and sodium ions from the extraccellular to the intracellular side of the cell membrane. The transport is electrogenic, pH dependent and partially tolerates substitution of Na(+) by Li(+). Preferentially transports smaller amino acids, such as glycine, L-alanine, L-serine, L-asparagine and L-threonine, followed by L-cysteine, L-histidine, L-proline and L-glutamine and L-methionine. The sequence is that of Sodium-coupled neutral amino acid transporter 4 from Pongo abelii (Sumatran orangutan).